A 130-amino-acid chain; its full sequence is Ribosome-binding factor A (130 aa).

The protein belongs to the RbfA family. In terms of assembly, monomer. Binds 30S ribosomal subunits, but not 50S ribosomal subunits or 70S ribosomes.

It is found in the cytoplasm. Functionally, one of several proteins that assist in the late maturation steps of the functional core of the 30S ribosomal subunit. Associates with free 30S ribosomal subunits (but not with 30S subunits that are part of 70S ribosomes or polysomes). Required for efficient processing of 16S rRNA. May interact with the 5'-terminal helix region of 16S rRNA. The protein is Ribosome-binding factor A of Alkalilimnicola ehrlichii (strain ATCC BAA-1101 / DSM 17681 / MLHE-1).